Here is a 257-residue protein sequence, read N- to C-terminus: Chymotrypsin-like protease VLCTLP (257 aa).

The signal sequence occupies residues 1 to 18 (MVLIRVLANLLLLQLSYA). Positions 19–24 (QKSSEL) are excised as a propeptide. A Peptidase S1 domain is found at 25-248 (VVGGDECNIN…YSDWIQSIIA (224 aa)). 6 disulfides stabilise this stretch: Cys31-Cys162, Cys49-Cys65, Cys97-Cys255, Cys141-Cys209, Cys173-Cys188, and Cys199-Cys224. Asn44 is a glycosylation site (N-linked (GlcNAc...) asparagine). The active-site Charge relay system is the His64. Residue Asn100 is glycosylated (N-linked (GlcNAc...) asparagine). Asp109 acts as the Charge relay system in catalysis. Asn116 and Asn153 each carry an N-linked (GlcNAc...) asparagine glycan. The active-site Charge relay system is Ser203. An N-linked (GlcNAc...) asparagine glycan is attached at Asn250.

This sequence belongs to the peptidase S1 family. Snake venom subfamily. As to quaternary structure, monomer. Partial deglycosylation has not effect on enzyme activity. Expressed by the venom gland.

It is found in the secreted. Its activity is regulated as follows. Inhibited by PMSF. Snake venom serine protease with tyrosine-specific chymotrypsin-like activity. Hydrolyzes the N-acetyl-L-tyrosine ethyl ester (ATEE). Has weak fibrinogenolytic activity. Weakly hydrolyzes azocasein, Aalpha-chain (FGA) and more slowly Bbeta-chain (FGB) of fibrinogen. Optimal substrates are angiotensins I and II (AGT). The protein is Chymotrypsin-like protease VLCTLP of Macrovipera lebetinus (Levantine viper).